The primary structure comprises 452 residues: MTNIALLQSLGLFDARVPRYTSYPAAPVFSGAVGADFQAQAIEALDPAVPISVYVHVPFCERLCWFCACRTQGTQTLAPVEAYVGTLLQELELVKQHLPAGVKAGRLHWGGGTPTILSPELIHKLAQAIKAVIPFAEDYEFSVEIDPMMVDEPKIRALSEEGMNRASIGIQDFTDIVQNAIGREQPFENTKACVETLRRYGVHSLNTDLVYGLPHQNRESLAATIDKVLSLRPDRVAIFGYAHVPWMAKRQKLIDETVLPPDIERHELANLAARLFTEGGFERIGIDHFALPDDSMAVAARSRKLRRNFQGYTDDTCPTLLGIGASSISKFEQGYLQNTAATAAYIKSIEEGRLPGYRGHRMTEEDYLHGRAIEMIMCDFFLDLPALRARFGEPAETMVPRIAEAAEKFTPFVTVDADGSMSIAKEGRALARMIARLFDAYETPEARYSQAS.

The Radical SAM core domain maps to 45 to 278; that stretch reads LDPAVPISVY…ANLAARLFTE (234 aa). Tyr-54 provides a ligand contact to S-adenosyl-L-methionine. 2 residues coordinate [4Fe-4S] cluster: Cys-60 and Cys-64. Phe-66 is a binding site for S-adenosyl-L-methionine. Cys-67 serves as a coordination point for [4Fe-4S] cluster. S-adenosyl-L-methionine is bound by residues Gly-111, 112–113, Glu-144, Gln-171, Arg-183, and Asp-208; that span reads GT.

This sequence belongs to the anaerobic coproporphyrinogen-III oxidase family. In terms of assembly, monomer. The cofactor is [4Fe-4S] cluster.

Its subcellular location is the cytoplasm. The enzyme catalyses coproporphyrinogen III + 2 S-adenosyl-L-methionine = protoporphyrinogen IX + 2 5'-deoxyadenosine + 2 L-methionine + 2 CO2. It functions in the pathway porphyrin-containing compound metabolism; protoporphyrin-IX biosynthesis; protoporphyrinogen-IX from coproporphyrinogen-III (AdoMet route): step 1/1. Functionally, anaerobic transformation of coproporphyrinogen III into protoporphyrinogen IX. Dedicated to bacteriochlorophyll biosynthesis. The protein is Coproporphyrinogen III oxidase, anaerobic 1 (hemN) of Cereibacter sphaeroides (strain ATCC 17023 / DSM 158 / JCM 6121 / CCUG 31486 / LMG 2827 / NBRC 12203 / NCIMB 8253 / ATH 2.4.1.) (Rhodobacter sphaeroides).